The following is a 365-amino-acid chain: Cobalt-precorrin-5B C(1)-methyltransferase (365 aa).

The protein belongs to the CbiD family.

The enzyme catalyses Co-precorrin-5B + S-adenosyl-L-methionine = Co-precorrin-6A + S-adenosyl-L-homocysteine. It functions in the pathway cofactor biosynthesis; adenosylcobalamin biosynthesis; cob(II)yrinate a,c-diamide from sirohydrochlorin (anaerobic route): step 6/10. Its function is as follows. Catalyzes the methylation of C-1 in cobalt-precorrin-5B to form cobalt-precorrin-6A. This Methanococcus maripaludis (strain C6 / ATCC BAA-1332) protein is Cobalt-precorrin-5B C(1)-methyltransferase.